Here is a 39-residue protein sequence, read N- to C-terminus: Cytochrome b559 subunit beta (39 aa).

A helical membrane pass occupies residues 14–30; the sequence is WLAVHGLAVPTVFFLGA. Heme is bound at residue H18.

The protein belongs to the PsbE/PsbF family. In terms of assembly, heterodimer of an alpha subunit and a beta subunit. PSII is composed of 1 copy each of membrane proteins PsbA, PsbB, PsbC, PsbD, PsbE, PsbF, PsbH, PsbI, PsbJ, PsbK, PsbL, PsbM, PsbT, PsbX, PsbY, PsbZ, Psb30/Ycf12, at least 3 peripheral proteins of the oxygen-evolving complex and a large number of cofactors. It forms dimeric complexes. It depends on heme b as a cofactor.

It localises to the plastid. Its subcellular location is the chloroplast thylakoid membrane. Its function is as follows. This b-type cytochrome is tightly associated with the reaction center of photosystem II (PSII). PSII is a light-driven water:plastoquinone oxidoreductase that uses light energy to abstract electrons from H(2)O, generating O(2) and a proton gradient subsequently used for ATP formation. It consists of a core antenna complex that captures photons, and an electron transfer chain that converts photonic excitation into a charge separation. The sequence is that of Cytochrome b559 subunit beta from Physcomitrium patens (Spreading-leaved earth moss).